A 2037-amino-acid polypeptide reads, in one-letter code: Protein SWOLLEN 1 (2037 aa).

11 disordered regions span residues valine 141 to aspartate 179, arginine 454 to aspartate 487, serine 504 to serine 531, lysine 567 to valine 637, serine 686 to alanine 705, valine 837 to lysine 893, alanine 1011 to proline 1045, lysine 1148 to proline 1197, serine 1729 to arginine 1748, lysine 1793 to glutamine 1812, and glutamate 1841 to lysine 2037. Basic and acidic residues predominate over residues serine 147–threonine 157. A compositionally biased stretch (polar residues) spans valine 158–valine 176. Over residues arginine 454–glycine 466 the composition is skewed to basic and acidic residues. Positions serine 504–serine 514 are enriched in low complexity. Residues glutamate 515–isoleucine 526 are compositionally biased toward polar residues. Positions serine 841–serine 852 are enriched in low complexity. The segment covering serine 853–serine 865 has biased composition (basic residues). 2 stretches are compositionally biased toward polar residues: residues glutamate 1025–asparagine 1041 and glutamine 1151–valine 1171. Basic residues predominate over residues threonine 1179–methionine 1189. Positions serine 1794–arginine 1805 are enriched in basic and acidic residues. Polar residues-rich tracts occupy residues lysine 1874 to arginine 1886, glutamate 1942 to lysine 1964, and leucine 2013 to proline 2023. Over residues serine 2028–lysine 2037 the composition is skewed to basic residues.

In terms of assembly, interacts with importin alpha IMPA1 and IMPA2, required for nuclear-localized proteins import. As to expression, mainly expressed in seedlings, flower buds and stems, and, to a lower extent, in leaves and siliques.

Its subcellular location is the nucleus. Its function is as follows. Under salt stress, appears to prevent the accumulation of reactive oxygen species (ROS) in roots and required for the maintenance of cell wall integrity (cellulose, pectin and lignin composition) by interacting with importin alpha (e.g. IMPA1 and IMPA2) and binding to the promoter of several ROS- and cell wall-related genes to regulate their expression. Necessary for cells organization in meristems and root elongation zones as well as for root elongation in high salinity, but not upon osmotic stress. The sequence is that of Protein SWOLLEN 1 from Arabidopsis thaliana (Mouse-ear cress).